The sequence spans 487 residues: Cyclic AMP-dependent transcription factor ATF-2 (487 aa).

Residues 7 to 31 (FLCTAPGCGQRFTNEDHLAVHKHKH) form a C2H2-type zinc finger. At Thr34 the chain carries Phosphothreonine; by PKC/PRKCH. A Phosphoserine modification is found at Ser44. Thr51 is modified (phosphothreonine; by MAPK11 and MAPK14). Residue Thr53 is modified to Phosphothreonine; by MAPK1, MAPK3, MAPK11, MAPK12, MAPK14 and PLK3. Thr55 is subject to Phosphothreonine; by VRK1. Phosphoserine occurs at positions 72 and 94. The residue at position 98 (Thr98) is a Phosphothreonine. Ser103 carries the phosphoserine; by PKC/PRKCA and PKC/PRKCB modification. Disordered stretches follow at residues 106–137 (EEPS…PLAQ) and 241–355 (PGIP…RQKR). At Ser118 the chain carries Phosphoserine. Residues 264–275 (LTQQHPPVTNGD) are compositionally biased toward polar residues. The interval 278 to 281 (KGHG) is essential for its histone acetyltransferase activity. The segment covering 300–316 (PATSTTETPASPAHTTP) has biased composition (low complexity). Phosphoserine is present on Ser310. Ser322 bears the Phosphoserine; by PKC/PRKCA and PKC/PRKCB mark. Positions 328–345 (AANEDPDEKRRKFLERNR) are enriched in basic and acidic residues. The bZIP domain maps to 334–397 (DEKRRKFLER…AQLKQLLLAH (64 aa)). The basic motif stretch occupies residues 336-356 (KRRKFLERNRAAASRCRQKRK). An N6-acetyllysine modification is found at Lys339. Phosphoserine; by PKC/PRKCA and PKC/PRKCB is present on Ser349. Lys356 is modified (N6-acetyllysine). Residues 362–390 (LEKKAEDLSSLNGQLQSEVTLLRNEVAQL) are leucine-zipper. A Nuclear export signal motif is present at residues 387–396 (VAQLKQLLLA). The tract at residues 407–453 (KKSGYHTADKDDSSEDLSVPSSPHTEAIQHSSVSTSNGVSSTSKAEA) is disordered. Phosphoserine is present on residues Ser424 and Ser428. Over residues 425–436 (VPSSPHTEAIQH) the composition is skewed to polar residues. The span at 437–449 (SSVSTSNGVSSTS) shows a compositional bias: low complexity. Residues Ser472 and Ser480 each carry the phosphoserine; by ATM modification.

The protein belongs to the bZIP family. ATF subfamily. In terms of assembly, binds DNA as a dimer and can form a homodimer in the absence of DNA. Can form a heterodimer with JUN. Heterodimerization is essential for its transcriptional activity. Interacts with SMAD3 and SMAD4. Interacts with the HK1/VDAC1 complex. Interacts with NBN, MRE11, XPO1, KAT5 and CUL3. Binds through its N-terminal region to UTF1 which acts as a coactivator of ATF2 transcriptional activity. Phosphorylation of Thr-51 by MAPK14 and MAPK11, and at Thr-53 by MAPK1/ERK2, MAPK3/ERK1, MAPK11, MAPK12 and MAPK14 in response to external stimulus like insulin causes increased transcriptional activity. Phosphorylated by PLK3 following hyperosmotic stress. Also phosphorylated and activated by JNK and CaMK4. ATM-mediated phosphorylation at Ser-472 and Ser-480 stimulates its function in DNA damage response. Phosphorylation at Ser-44, Thr-55 and Ser-103 activates its transcriptional activity. Phosphorylation at Thr-51 or Thr-53 enhances acetylation of histones H2B and H4.

The protein localises to the nucleus. The protein resides in the cytoplasm. Its subcellular location is the mitochondrion outer membrane. In terms of biological role, transcriptional activator which regulates the transcription of various genes, including those involved in anti-apoptosis, cell growth, and DNA damage response. Dependent on its binding partner, binds to CRE (cAMP response element) consensus sequences (5'-TGACGTCA-3') or to AP-1 (activator protein 1) consensus sequences (5'-TGACTCA-3'). In the nucleus, contributes to global transcription and the DNA damage response, in addition to specific transcriptional activities that are related to cell development, proliferation and death. In the cytoplasm, interacts with and perturbs HK1- and VDAC1-containing complexes at the mitochondrial outer membrane, thereby impairing mitochondrial membrane potential, inducing mitochondrial leakage and promoting cell death. The phosphorylated form (mediated by ATM) plays a role in the DNA damage response and is involved in the ionizing radiation (IR)-induced S phase checkpoint control and in the recruitment of the MRN complex into the IR-induced foci (IRIF). Exhibits histone acetyltransferase (HAT) activity which specifically acetylates histones H2B and H4 in vitro. In concert with CUL3 and RBX1, promotes the degradation of KAT5 thereby attenuating its ability to acetylate and activate ATM. Can elicit oncogenic or tumor suppressor activities depending on the tissue or cell type. This is Cyclic AMP-dependent transcription factor ATF-2 (Atf2) from Mus musculus (Mouse).